Reading from the N-terminus, the 152-residue chain is Calmodulin (152 aa).

Ala2 is modified (N-acetylalanine). EF-hand domains lie at 10-45 (EQIA…LGQN), 46-81 (PTEA…KMQD), 83-118 (DTEE…LGEK), and 119-152 (LTNE…IVRN). 20 residues coordinate Ca(2+): Asp23, Asp25, Asp27, Ser29, Glu34, Asp59, Asp61, Asn63, Asn65, Glu70, Asp96, Asp98, Asn100, Tyr102, Glu107, Asp132, Asp134, Asp136, Gln138, and Glu143.

This sequence belongs to the calmodulin family. Interacts with cmbB, numA/nucleomorphin, pgkA/phosphoglycerate kinase, and thyB/thymidine kinase in the presence of Ca(2+). Interacts with dwwA in the absence of Ca(2+). Post-translationally, the N-terminus is blocked. In terms of processing, trimethylation of Lys-118 observed in other calmodulins is absent here.

It localises to the contractile vacuole. Its function is as follows. Calmodulin mediates the control of a large number of enzymes, ion channels and other proteins by Ca(2+). Among the enzymes to be stimulated by the calmodulin-Ca(2+) complex are a number of protein kinases and phosphatases. This is Calmodulin (calA) from Dictyostelium discoideum (Social amoeba).